The sequence spans 94 residues: Putative pterin-4-alpha-carbinolamine dehydratase (94 aa).

The protein belongs to the pterin-4-alpha-carbinolamine dehydratase family.

It carries out the reaction (4aS,6R)-4a-hydroxy-L-erythro-5,6,7,8-tetrahydrobiopterin = (6R)-L-erythro-6,7-dihydrobiopterin + H2O. This Mycolicibacterium smegmatis (strain ATCC 700084 / mc(2)155) (Mycobacterium smegmatis) protein is Putative pterin-4-alpha-carbinolamine dehydratase.